The sequence spans 427 residues: Peptidase B (427 aa).

2 residues coordinate Mn(2+): Lys-195 and Asp-200. Lys-207 is a catalytic residue. 3 residues coordinate Mn(2+): Asp-218, Asp-277, and Glu-279. Arg-281 is a catalytic residue.

It belongs to the peptidase M17 family. Homohexamer. Requires Mn(2+) as cofactor.

The protein localises to the cytoplasm. The catalysed reaction is Release of an N-terminal amino acid, Xaa, from a peptide or arylamide. Xaa is preferably Glu or Asp but may be other amino acids, including Leu, Met, His, Cys and Gln.. Its function is as follows. Probably plays an important role in intracellular peptide degradation. The protein is Peptidase B of Shigella flexneri serotype 5b (strain 8401).